A 299-amino-acid chain; its full sequence is Coenzyme PQQ synthesis protein B (299 aa).

This sequence belongs to the PqqB family.

It participates in cofactor biosynthesis; pyrroloquinoline quinone biosynthesis. May be involved in the transport of PQQ or its precursor to the periplasm. This is Coenzyme PQQ synthesis protein B from Xanthomonas campestris pv. campestris (strain 8004).